Here is a 237-residue protein sequence, read N- to C-terminus: 6-carboxyhexanoate--CoA ligase (237 aa).

Belongs to the BioW family. As to quaternary structure, homodimer. Mg(2+) is required as a cofactor.

The catalysed reaction is heptanedioate + ATP + CoA = 6-carboxyhexanoyl-CoA + AMP + diphosphate. The protein operates within metabolic intermediate metabolism; pimeloyl-CoA biosynthesis; pimeloyl-CoA from pimelate: step 1/1. Functionally, catalyzes the transformation of pimelate into pimeloyl-CoA with concomitant hydrolysis of ATP to AMP. The chain is 6-carboxyhexanoate--CoA ligase from Methanocaldococcus jannaschii (strain ATCC 43067 / DSM 2661 / JAL-1 / JCM 10045 / NBRC 100440) (Methanococcus jannaschii).